The following is a 461-amino-acid chain: UDP-glucose 6-dehydrogenase TuaD (461 aa).

NAD(+) is bound by residues 3–20 (KIAV…GTCF), Val-12, Asp-31, Lys-36, Thr-122, and Glu-156. Substrate is bound by residues 152-156 (EFLRE), Lys-205, Asn-209, 250-254 (FLKAG), and Gly-258. The active-site Nucleophile is Cys-261. Residue Lys-264 coordinates NAD(+). Lys-321 contacts substrate. Arg-328 serves as a coordination point for NAD(+).

This sequence belongs to the UDP-glucose/GDP-mannose dehydrogenase family. Phosphorylated by YwqD and dephosphorylated by YwqE in vitro.

It is found in the cytoplasm. The enzyme catalyses UDP-alpha-D-glucose + 2 NAD(+) + H2O = UDP-alpha-D-glucuronate + 2 NADH + 3 H(+). Its pathway is nucleotide-sugar biosynthesis; UDP-alpha-D-glucuronate biosynthesis; UDP-alpha-D-glucuronate from UDP-alpha-D-glucose: step 1/1. Its activity is regulated as follows. Activated by phosphorylation; inhibited by dephosphorylation. Functionally, catalyzes the conversion of UDP-glucose into UDP-glucuronate, one of the precursors of teichuronic acid. This chain is UDP-glucose 6-dehydrogenase TuaD (tuaD), found in Bacillus subtilis (strain 168).